The following is a 462-amino-acid chain: L-seryl-tRNA(Sec) selenium transferase (462 aa).

K294 carries the N6-(pyridoxal phosphate)lysine modification.

The protein belongs to the SelA family. As to quaternary structure, homodecamer; pentamer of dimers. Binds only one seryl-tRNA(Sec) per dimer. Requires pyridoxal 5'-phosphate as cofactor.

The protein localises to the cytoplasm. It catalyses the reaction L-seryl-tRNA(Sec) + selenophosphate + H(+) = L-selenocysteinyl-tRNA(Sec) + phosphate. Its pathway is aminoacyl-tRNA biosynthesis; selenocysteinyl-tRNA(Sec) biosynthesis; selenocysteinyl-tRNA(Sec) from L-seryl-tRNA(Sec) (bacterial route): step 1/1. In terms of biological role, converts seryl-tRNA(Sec) to selenocysteinyl-tRNA(Sec) required for selenoprotein biosynthesis. This Yersinia enterocolitica serotype O:8 / biotype 1B (strain NCTC 13174 / 8081) protein is L-seryl-tRNA(Sec) selenium transferase.